Here is a 521-residue protein sequence, read N- to C-terminus: Bifunctional purine biosynthesis protein PurH (521 aa).

Positions 1-150 (MSEDRKAIKR…KNHPSVAVVT (150 aa)) constitute an MGS-like domain.

Belongs to the PurH family.

It carries out the reaction (6R)-10-formyltetrahydrofolate + 5-amino-1-(5-phospho-beta-D-ribosyl)imidazole-4-carboxamide = 5-formamido-1-(5-phospho-D-ribosyl)imidazole-4-carboxamide + (6S)-5,6,7,8-tetrahydrofolate. The catalysed reaction is IMP + H2O = 5-formamido-1-(5-phospho-D-ribosyl)imidazole-4-carboxamide. It functions in the pathway purine metabolism; IMP biosynthesis via de novo pathway; 5-formamido-1-(5-phospho-D-ribosyl)imidazole-4-carboxamide from 5-amino-1-(5-phospho-D-ribosyl)imidazole-4-carboxamide (10-formyl THF route): step 1/1. Its pathway is purine metabolism; IMP biosynthesis via de novo pathway; IMP from 5-formamido-1-(5-phospho-D-ribosyl)imidazole-4-carboxamide: step 1/1. This Corynebacterium efficiens (strain DSM 44549 / YS-314 / AJ 12310 / JCM 11189 / NBRC 100395) protein is Bifunctional purine biosynthesis protein PurH.